The sequence spans 159 residues: Globin D, coelomic (159 aa).

Position 2 is an N-acetylglycine (Gly-2). One can recognise a Globin domain in the interval 12–158 (DLTPAEKDLI…VQGVLITKHA (147 aa)). Heme b is bound by residues His-74 and His-105.

Belongs to the globin family. As to quaternary structure, homodimer.

This Molpadia arenicola (Sea cucumber) protein is Globin D, coelomic.